The primary structure comprises 328 residues: Protease HtpX homolog (328 aa).

The next 2 helical transmembrane spans lie at 6 to 26 (TAMLLAFMTALFMGVGYLIGG) and 28 to 48 (SGMMIAFVAAAGMNFFSYWNS). A Zn(2+)-binding site is contributed by histidine 130. Glutamate 131 is an active-site residue. Histidine 134 serves as a coordination point for Zn(2+). The next 2 membrane-spanning stretches (helical) occupy residues 145 to 165 (ITATLAGAISMLGNFAFFFGG) and 172 to 192 (PLGAIGVLAAMIVAPLAAMLV). Glutamate 201 serves as a coordination point for Zn(2+). A disordered region spans residues 279 to 328 (QYGGGTGPSVGTPTRSGSTGPAMTANPERKSRSVPNTGRGGSQPPKGPWS). Low complexity predominate over residues 287-299 (SVGTPTRSGSTGP).

It belongs to the peptidase M48B family. Requires Zn(2+) as cofactor.

It localises to the cell inner membrane. This is Protease HtpX homolog from Rhizobium rhizogenes (strain K84 / ATCC BAA-868) (Agrobacterium radiobacter).